The primary structure comprises 90 residues: U7-theraphotoxin-Hhn1a 1 (90 aa).

An N-terminal signal peptide occupies residues M1 to S19. Residues F20–E50 constitute a propeptide that is removed on maturation. 3 cysteine pairs are disulfide-bonded: C51-C65, C58-C70, and C64-C81.

It belongs to the neurotoxin 10 (Hwtx-1) family. 13 (Hntx-13) subfamily. In terms of tissue distribution, expressed by the venom gland.

The protein resides in the secreted. In terms of biological role, ion channel inhibitor. The sequence is that of U7-theraphotoxin-Hhn1a 1 from Cyriopagopus hainanus (Chinese bird spider).